The following is a 369-amino-acid chain: tRNA pseudouridine synthase D (369 aa).

D80 acts as the Nucleophile in catalysis. Residues 156–318 (GIPNWFGEQR…LKQERRALRL (163 aa)) enclose the TRUD domain.

The protein belongs to the pseudouridine synthase TruD family.

It catalyses the reaction uridine(13) in tRNA = pseudouridine(13) in tRNA. In terms of biological role, responsible for synthesis of pseudouridine from uracil-13 in transfer RNAs. The protein is tRNA pseudouridine synthase D of Xanthomonas euvesicatoria pv. vesicatoria (strain 85-10) (Xanthomonas campestris pv. vesicatoria).